The primary structure comprises 121 residues: Ribonuclease P protein component (121 aa).

Belongs to the RnpA family. As to quaternary structure, consists of a catalytic RNA component (M1 or rnpB) and a protein subunit.

It catalyses the reaction Endonucleolytic cleavage of RNA, removing 5'-extranucleotides from tRNA precursor.. Functionally, RNaseP catalyzes the removal of the 5'-leader sequence from pre-tRNA to produce the mature 5'-terminus. It can also cleave other RNA substrates such as 4.5S RNA. The protein component plays an auxiliary but essential role in vivo by binding to the 5'-leader sequence and broadening the substrate specificity of the ribozyme. The protein is Ribonuclease P protein component of Erythrobacter litoralis (strain HTCC2594).